Consider the following 229-residue polypeptide: Biosynthetic peptidoglycan transglycosylase (229 aa).

The helical transmembrane segment at 14-34 (FITWRFLLVVVLLLLVLLLVL) threads the bilayer.

This sequence belongs to the glycosyltransferase 51 family.

The protein localises to the cell inner membrane. The enzyme catalyses [GlcNAc-(1-&gt;4)-Mur2Ac(oyl-L-Ala-gamma-D-Glu-L-Lys-D-Ala-D-Ala)](n)-di-trans,octa-cis-undecaprenyl diphosphate + beta-D-GlcNAc-(1-&gt;4)-Mur2Ac(oyl-L-Ala-gamma-D-Glu-L-Lys-D-Ala-D-Ala)-di-trans,octa-cis-undecaprenyl diphosphate = [GlcNAc-(1-&gt;4)-Mur2Ac(oyl-L-Ala-gamma-D-Glu-L-Lys-D-Ala-D-Ala)](n+1)-di-trans,octa-cis-undecaprenyl diphosphate + di-trans,octa-cis-undecaprenyl diphosphate + H(+). It functions in the pathway cell wall biogenesis; peptidoglycan biosynthesis. In terms of biological role, peptidoglycan polymerase that catalyzes glycan chain elongation from lipid-linked precursors. This Shewanella denitrificans (strain OS217 / ATCC BAA-1090 / DSM 15013) protein is Biosynthetic peptidoglycan transglycosylase.